The primary structure comprises 316 residues: Transaldolase (316 aa).

The active-site Schiff-base intermediate with substrate is lysine 126.

This sequence belongs to the transaldolase family. Type 1 subfamily. In terms of assembly, homodimer.

The protein localises to the cytoplasm. The catalysed reaction is D-sedoheptulose 7-phosphate + D-glyceraldehyde 3-phosphate = D-erythrose 4-phosphate + beta-D-fructose 6-phosphate. Its pathway is carbohydrate degradation; pentose phosphate pathway; D-glyceraldehyde 3-phosphate and beta-D-fructose 6-phosphate from D-ribose 5-phosphate and D-xylulose 5-phosphate (non-oxidative stage): step 2/3. Transaldolase is important for the balance of metabolites in the pentose-phosphate pathway. The polypeptide is Transaldolase (Methylibium petroleiphilum (strain ATCC BAA-1232 / LMG 22953 / PM1)).